The following is a 102-amino-acid chain: uncharacterized protein (102 aa).

The chain crosses the membrane as a helical span at residues 77–96 (FFSACVAKSYSSFFISICIL).

Its subcellular location is the membrane. This is an uncharacterized protein from Saccharomyces cerevisiae (strain ATCC 204508 / S288c) (Baker's yeast).